Here is a 668-residue protein sequence, read N- to C-terminus: tRNA 5-methylaminomethyl-2-thiouridine biosynthesis bifunctional protein MnmC (668 aa).

The tRNA (mnm(5)s(2)U34)-methyltransferase stretch occupies residues 1-245 (MKHYSIQPAN…KREMLCGVME (245 aa)). Positions 270 to 668 (IGGGIASALL…LLKGKAVKAG (399 aa)) are FAD-dependent cmnm(5)s(2)U34 oxidoreductase.

This sequence in the N-terminal section; belongs to the methyltransferase superfamily. tRNA (mnm(5)s(2)U34)-methyltransferase family. The protein in the C-terminal section; belongs to the DAO family. Requires FAD as cofactor.

It localises to the cytoplasm. It carries out the reaction 5-aminomethyl-2-thiouridine(34) in tRNA + S-adenosyl-L-methionine = 5-methylaminomethyl-2-thiouridine(34) in tRNA + S-adenosyl-L-homocysteine + H(+). Functionally, catalyzes the last two steps in the biosynthesis of 5-methylaminomethyl-2-thiouridine (mnm(5)s(2)U) at the wobble position (U34) in tRNA. Catalyzes the FAD-dependent demodification of cmnm(5)s(2)U34 to nm(5)s(2)U34, followed by the transfer of a methyl group from S-adenosyl-L-methionine to nm(5)s(2)U34, to form mnm(5)s(2)U34. The protein is tRNA 5-methylaminomethyl-2-thiouridine biosynthesis bifunctional protein MnmC of Shigella dysenteriae serotype 1 (strain Sd197).